The chain runs to 393 residues: Leucine aminopeptidase 1 (393 aa).

Residues 1–18 form the signal peptide; sequence MKLSQVSALAACVPAATA. Residues 19–84 constitute a propeptide that is removed on maturation; the sequence is RFVELMEADH…GSQGLRIKES (66 aa). Asn176 is a glycosylation site (N-linked (GlcNAc...) asparagine). Residues His184, Asp202, Glu241, and Asp268 each coordinate Zn(2+). Cys317 and Cys321 form a disulfide bridge. Residue His350 coordinates Zn(2+).

The protein belongs to the peptidase M28 family. M28E subfamily. As to quaternary structure, monomer. Requires Zn(2+) as cofactor.

Its subcellular location is the secreted. Its function is as follows. Extracellular aminopeptidase that allows assimilation of proteinaceous substrates. In Metarhizium robertsii (strain ARSEF 23 / ATCC MYA-3075) (Metarhizium anisopliae (strain ARSEF 23)), this protein is Leucine aminopeptidase 1 (LAP1).